The following is a 180-amino-acid chain: Photosystem II extrinsic protein V (180 aa).

The signal sequence occupies residues 1–40; that stretch reads MFSKAFSFQKVFAPARRRLLVLLLAALMAGFGWGLAPVFA. Cys-73, Cys-76, His-77, and His-128 together coordinate heme c.

This sequence belongs to the cytochrome c family. PsbV subfamily. In terms of assembly, PSII is composed of 1 copy each of membrane proteins PsbA, PsbB, PsbC, PsbD, PsbE, PsbF, PsbH, PsbI, PsbJ, PsbK, PsbL, PsbM, PsbT, PsbX, PsbY, PsbZ, Psb30/Ycf12, peripheral proteins PsbO, CyanoQ (PsbQ), PsbU, PsbV and a large number of cofactors. It forms dimeric complexes. It depends on heme c as a cofactor.

Its subcellular location is the cellular thylakoid membrane. Functionally, one of the extrinsic, lumenal subunits of photosystem II (PSII). PSII is a light-driven water plastoquinone oxidoreductase, using light energy to abstract electrons from H(2)O, generating a proton gradient subsequently used for ATP formation. The extrinsic proteins stabilize the structure of photosystem II oxygen-evolving complex (OEC), the ion environment of oxygen evolution and protect the OEC against heat-induced inactivation. Low-potential cytochrome c that plays a role in the OEC of PSII. The protein is Photosystem II extrinsic protein V of Synechococcus sp. (strain JA-2-3B'a(2-13)) (Cyanobacteria bacterium Yellowstone B-Prime).